The chain runs to 144 residues: Large ribosomal subunit protein uL16 (144 aa).

This sequence belongs to the universal ribosomal protein uL16 family. As to quaternary structure, part of the 50S ribosomal subunit.

In terms of biological role, binds 23S rRNA and is also seen to make contacts with the A and possibly P site tRNAs. The polypeptide is Large ribosomal subunit protein uL16 (Novosphingobium aromaticivorans (strain ATCC 700278 / DSM 12444 / CCUG 56034 / CIP 105152 / NBRC 16084 / F199)).